We begin with the raw amino-acid sequence, 739 residues long: Conserved oligomeric Golgi complex subunit 6 (739 aa).

Disordered stretches follow at residues 1–35 and 686–706; these read MATGSYFPPPGAPSSISPRNSTPALSPLSPPLQQR and VGQSDGAVNEEGEEGDGDGDG. Residues 693-706 show a composition bias toward acidic residues; sequence VNEEGEEGDGDGDG.

This sequence belongs to the COG6 family.

Its subcellular location is the golgi apparatus membrane. In terms of biological role, acts as a component of the peripheral membrane COG complex that is involved in intra-Golgi protein trafficking. COG is located at the cis-Golgi, and regulates tethering of retrograde intra-Golgi vesicles and possibly a number of other membrane trafficking events. The protein is Conserved oligomeric Golgi complex subunit 6 (cog6) of Emericella nidulans (strain FGSC A4 / ATCC 38163 / CBS 112.46 / NRRL 194 / M139) (Aspergillus nidulans).